The following is a 117-amino-acid chain: NADH-ubiquinone oxidoreductase chain 3 (117 aa).

Helical transmembrane passes span I4 to I24, I60 to I80, and I86 to H106.

This sequence belongs to the complex I subunit 3 family.

It is found in the mitochondrion membrane. It catalyses the reaction a ubiquinone + NADH + 5 H(+)(in) = a ubiquinol + NAD(+) + 4 H(+)(out). In terms of biological role, core subunit of the mitochondrial membrane respiratory chain NADH dehydrogenase (Complex I) that is believed to belong to the minimal assembly required for catalysis. Complex I functions in the transfer of electrons from NADH to the respiratory chain. The immediate electron acceptor for the enzyme is believed to be ubiquinone. In Drosophila subobscura (Fruit fly), this protein is NADH-ubiquinone oxidoreductase chain 3 (mt:ND3).